The sequence spans 259 residues: Keratin-associated protein 10-8 (259 aa).

The tract at residues 26–243 (HVSRVSSPST…SCQPSCCHPA (218 aa)) is 19 X 5 AA repeats of C-C-X(3). Tandem repeats lie at residues 50–54 (CCEPR), 60–64 (CCTPS), 65–69 (CCAPA), 98–102 (CCQQS), 108–112 (CCTSS), 118–122 (CCVPV), 123–127 (CCKSN), 133–137 (CCVSI), 145–149 (CCQQS), 155–159 (CCTFS), 165–169 (CCVPI), 170–174 (CCKPI), 175–179 (CCVPV), 187–191 (CCQKS), 197–201 (CCTTS), 202–206 (CCRPS), 221–225 (CCVPV), 228–232 (CCVPA), and 239–243 (CCHPA).

It belongs to the KRTAP type 10 family. As to quaternary structure, interacts with hair keratins. In terms of tissue distribution, restricted to a narrow region of the hair fiber cuticle, lying approximately 20 cell layers above the apex of the dermal papilla of the hair root; not detected in any other tissues.

In terms of biological role, in the hair cortex, hair keratin intermediate filaments are embedded in an interfilamentous matrix, consisting of hair keratin-associated proteins (KRTAP), which are essential for the formation of a rigid and resistant hair shaft through their extensive disulfide bond cross-linking with abundant cysteine residues of hair keratins. The matrix proteins include the high-sulfur and high-glycine-tyrosine keratins. The chain is Keratin-associated protein 10-8 (KRTAP10-8) from Homo sapiens (Human).